Reading from the N-terminus, the 117-residue chain is Large ribosomal subunit protein uL18 (117 aa).

This sequence belongs to the universal ribosomal protein uL18 family. Part of the 50S ribosomal subunit; part of the 5S rRNA/L5/L18/L25 subcomplex. Contacts the 5S and 23S rRNAs.

Functionally, this is one of the proteins that bind and probably mediate the attachment of the 5S RNA into the large ribosomal subunit, where it forms part of the central protuberance. The protein is Large ribosomal subunit protein uL18 of Aliivibrio salmonicida (strain LFI1238) (Vibrio salmonicida (strain LFI1238)).